The sequence spans 69 residues: Sec-independent protein translocase protein TatA (69 aa).

Residues 1–21 form a helical membrane-spanning segment; the sequence is MFGLGGQELILILLIILLLFG.

This sequence belongs to the TatA/E family. Forms a complex with TatC.

The protein resides in the cell inner membrane. Functionally, part of the twin-arginine translocation (Tat) system that transports large folded proteins containing a characteristic twin-arginine motif in their signal peptide across membranes. TatA could form the protein-conducting channel of the Tat system. The polypeptide is Sec-independent protein translocase protein TatA (Pelodictyon phaeoclathratiforme (strain DSM 5477 / BU-1)).